Here is a 480-residue protein sequence, read N- to C-terminus: UDP-glycosyltransferase 72B2 (480 aa).

UDP-alpha-D-glucose contacts are provided by residues S277, 347 to 349 (APQ), 364 to 372 (HCGWNSTLE), and 386 to 389 (FAEQ).

The protein belongs to the UDP-glycosyltransferase family.

The polypeptide is UDP-glycosyltransferase 72B2 (UGT72B2) (Arabidopsis thaliana (Mouse-ear cress)).